Here is a 232-residue protein sequence, read N- to C-terminus: Ornithine carbamoyltransferase (232 aa).

Carbamoyl phosphate is bound by residues Gln-15, Arg-39, and 66-69 (HPTQ). L-ornithine contacts are provided by residues Asn-99, Asp-163, and 167 to 168 (SM). Carbamoyl phosphate contacts are provided by residues 204–207 (HCLP) and Thr-232.

The protein belongs to the aspartate/ornithine carbamoyltransferase superfamily. OTCase family.

It localises to the cytoplasm. The enzyme catalyses carbamoyl phosphate + L-ornithine = L-citrulline + phosphate + H(+). It participates in amino-acid biosynthesis; L-arginine biosynthesis; L-arginine from L-ornithine and carbamoyl phosphate: step 1/3. In terms of biological role, reversibly catalyzes the transfer of the carbamoyl group from carbamoyl phosphate (CP) to the N(epsilon) atom of ornithine (ORN) to produce L-citrulline. The chain is Ornithine carbamoyltransferase (argF) from Neisseria perflava.